Consider the following 188-residue polypeptide: Gamma-glutamylcyclotransferase (188 aa).

19–24 (YFAYGS) is a binding site for substrate. Glutamate 98 acts as the Proton acceptor in catalysis. Tyrosine 139 contributes to the substrate binding site. At serine 173 the chain carries Phosphoserine.

Belongs to the gamma-glutamylcyclotransferase family. Homodimer.

It catalyses the reaction an alpha-(gamma-L-glutamyl)-L-amino acid = 5-oxo-L-proline + an L-alpha-amino acid. Its function is as follows. Catalyzes the formation of 5-oxoproline from gamma-glutamyl dipeptides and may play a significant role in glutathione homeostasis. Induces release of cytochrome c from mitochondria with resultant induction of apoptosis. This Homo sapiens (Human) protein is Gamma-glutamylcyclotransferase.